The following is a 218-amino-acid chain: Pyridoxine/pyridoxamine 5'-phosphate oxidase (218 aa).

Substrate is bound by residues 12 to 15 (RLAY) and Arg-70. FMN contacts are provided by residues 65 to 70 (RTVLLR), 80 to 81 (YT), Lys-87, and Gln-109. Substrate-binding residues include Tyr-127, Arg-131, and Ser-135. FMN is bound by residues 145 to 146 (QS) and Trp-191. Residue 197–199 (RLH) coordinates substrate. Position 201 (Arg-201) interacts with FMN.

The protein belongs to the pyridoxamine 5'-phosphate oxidase family. In terms of assembly, homodimer. The cofactor is FMN.

The catalysed reaction is pyridoxamine 5'-phosphate + O2 + H2O = pyridoxal 5'-phosphate + H2O2 + NH4(+). It catalyses the reaction pyridoxine 5'-phosphate + O2 = pyridoxal 5'-phosphate + H2O2. Its pathway is cofactor metabolism; pyridoxal 5'-phosphate salvage; pyridoxal 5'-phosphate from pyridoxamine 5'-phosphate: step 1/1. The protein operates within cofactor metabolism; pyridoxal 5'-phosphate salvage; pyridoxal 5'-phosphate from pyridoxine 5'-phosphate: step 1/1. Catalyzes the oxidation of either pyridoxine 5'-phosphate (PNP) or pyridoxamine 5'-phosphate (PMP) into pyridoxal 5'-phosphate (PLP). This chain is Pyridoxine/pyridoxamine 5'-phosphate oxidase, found in Deinococcus geothermalis (strain DSM 11300 / CIP 105573 / AG-3a).